The following is a 268-amino-acid chain: Ribosomal RNA small subunit methyltransferase A (268 aa).

Positions 10, 12, 37, 58, 83, and 107 each coordinate S-adenosyl-L-methionine.

It belongs to the class I-like SAM-binding methyltransferase superfamily. rRNA adenine N(6)-methyltransferase family. RsmA subfamily.

It localises to the cytoplasm. It carries out the reaction adenosine(1518)/adenosine(1519) in 16S rRNA + 4 S-adenosyl-L-methionine = N(6)-dimethyladenosine(1518)/N(6)-dimethyladenosine(1519) in 16S rRNA + 4 S-adenosyl-L-homocysteine + 4 H(+). Its function is as follows. Specifically dimethylates two adjacent adenosines (A1518 and A1519) in the loop of a conserved hairpin near the 3'-end of 16S rRNA in the 30S particle. May play a critical role in biogenesis of 30S subunits. The protein is Ribosomal RNA small subunit methyltransferase A of Caldanaerobacter subterraneus subsp. tengcongensis (strain DSM 15242 / JCM 11007 / NBRC 100824 / MB4) (Thermoanaerobacter tengcongensis).